A 243-amino-acid polypeptide reads, in one-letter code: Carboxy-S-adenosyl-L-methionine synthase (243 aa).

S-adenosyl-L-methionine contacts are provided by residues Tyr-40, Gly-65–Ser-67, Asp-90–Asn-91, Asp-118–Ile-119, Asn-133, and Arg-200.

Belongs to the class I-like SAM-binding methyltransferase superfamily. Cx-SAM synthase family. Homodimer.

It catalyses the reaction prephenate + S-adenosyl-L-methionine = carboxy-S-adenosyl-L-methionine + 3-phenylpyruvate + H2O. In terms of biological role, catalyzes the conversion of S-adenosyl-L-methionine (SAM) to carboxy-S-adenosyl-L-methionine (Cx-SAM). The sequence is that of Carboxy-S-adenosyl-L-methionine synthase from Shewanella frigidimarina (strain NCIMB 400).